The following is a 99-amino-acid chain: HssA/B-like protein 41 (99 aa).

Residues 1-29 (MTLFSSISSISNPMTSSKSSISSFGSGTS) form a disordered region.

The protein belongs to the hssA/B family.

The sequence is that of HssA/B-like protein 41 (hssl41) from Dictyostelium discoideum (Social amoeba).